We begin with the raw amino-acid sequence, 154 residues long: Superoxide dismutase [Cu-Zn] (154 aa).

His-45, His-47, and His-62 together coordinate Cu cation. Cysteines 56 and 146 form a disulfide. Zn(2+)-binding residues include His-62, His-70, His-79, and Asp-82. A Cu cation-binding site is contributed by His-120.

Belongs to the Cu-Zn superoxide dismutase family. In terms of assembly, homodimer. The cofactor is Cu cation. Zn(2+) is required as a cofactor.

The protein localises to the cytoplasm. The catalysed reaction is 2 superoxide + 2 H(+) = H2O2 + O2. Destroys radicals which are normally produced within the cells and which are toxic to biological systems. The protein is Superoxide dismutase [Cu-Zn] of Bombyx mori (Silk moth).